The chain runs to 65 residues: Putative cytochrome c oxidase subunit 5C-4 (65 aa).

The chain crosses the membrane as a helical span at residues 20 to 37 (EIIYGITLGFAVGGLWKM).

The protein belongs to the cytochrome c oxidase subunit 5C family.

Its subcellular location is the mitochondrion inner membrane. In terms of biological role, this protein is one of the nuclear-coded polypeptide chains of cytochrome c oxidase, the terminal oxidase in mitochondrial electron transport. The polypeptide is Putative cytochrome c oxidase subunit 5C-4 (Arabidopsis thaliana (Mouse-ear cress)).